The primary structure comprises 488 residues: (S)-N-methylcoclaurine 3'-hydroxylase isozyme 2 (488 aa).

Residues 3–23 form a helical membrane-spanning segment; sequence VVTVALIAVIISSILYLLFGS. Residue C430 coordinates heme.

The protein belongs to the cytochrome P450 family. Heme is required as a cofactor.

The protein localises to the endoplasmic reticulum membrane. The protein resides in the microsome membrane. It carries out the reaction (S)-N-methylcoclaurine + reduced [NADPH--hemoprotein reductase] + O2 = (S)-3'-hydroxy-N-methylcoclaurine + oxidized [NADPH--hemoprotein reductase] + H2O + H(+). The protein operates within alkaloid biosynthesis; (S)-reticuline biosynthesis; (S)-reticuline from (S)-norcoclaurine: step 3/4. 3'-hydroxylation of (S)-N-methylcoclaurine. This is (S)-N-methylcoclaurine 3'-hydroxylase isozyme 2 (CYP80B2) from Eschscholzia californica (California poppy).